Reading from the N-terminus, the 409-residue chain is Major capsid protein (409 aa).

This sequence belongs to the lambda phage major capsid protein family. As to quaternary structure, homomultimer. Interacts with the portal protein. Interacts with the decoration protein.

Its subcellular location is the virion. It is found in the host cytoplasm. In terms of biological role, assembles to form an icosahedric capsid shell with a T=7 symmetry although with a diameter of about 82 nm, which is a larger volume than the usual T=7 capsids. A dramatic reconfiguration of the capsid shell that expands the procaspid from a diameter of 66 nm to a supersized capsid of 82 nm, allows packaging of the large viral DNA genome. The capsid decoration protein binds the expanded capsid and stabilizes it. In Thermus virus P23-45 (Thermus thermophilus phage P23-45), this protein is Major capsid protein.